Reading from the N-terminus, the 485-residue chain is Mitochondrial metalloendopeptidase OMA1 (485 aa).

The transit peptide at 1 to 16 (MKPSLKRRLLLLSRKF) directs the protein to the mitochondrion. Topologically, residues 17-147 (AKASIRKLLR…GPGRWFQNPR (131 aa)) are mitochondrial matrix. Residues 148 to 168 (TVFTVVLVGSVGLITLIVGNT) form a helical membrane-spanning segment. At 169 to 485 (ETIPYTKRTH…AGRTGVEGFL (317 aa)) the chain is on the mitochondrial intermembrane side. H352 lines the Zn(2+) pocket. Residue E353 is part of the active site. H356 and E405 together coordinate Zn(2+). The required for protease activation stretch occupies residues 456 to 485 (KLLAQANVMEEALMIYREVQAGRTGVEGFL).

It belongs to the peptidase M48A family. Homooligomer. Zn(2+) is required as a cofactor.

The protein localises to the mitochondrion inner membrane. Its function is as follows. Protease that is part of the quality control system in the inner membrane of mitochondria. Metalloendopeptidase that modulates the oxidative phosphorylation (OXPHOS) system and plant growth. Involved in tolerance mechanisms to heat, osmotic and oxidative stresses. The chain is Mitochondrial metalloendopeptidase OMA1 from Arabidopsis thaliana (Mouse-ear cress).